Reading from the N-terminus, the 218-residue chain is ATP synthase subunit a (218 aa).

5 consecutive transmembrane segments (helical) span residues 17-37, 75-95, 104-124, 162-184, and 196-216; these read IYSTVVNTWIIMILLLAGIFL, YLPLVATLFIFILSLNLSWFI, DLSTTAAFAVTTIILVQIFGI, LFGNLFGEEMVVTILFLMIPFLL, and GTIQAFVFTLLTITYIANFVH.

Belongs to the ATPase A chain family. In terms of assembly, F-type ATPases have 2 components, CF(1) - the catalytic core - and CF(0) - the membrane proton channel. CF(1) has five subunits: alpha(3), beta(3), gamma(1), delta(1), epsilon(1). CF(0) has three main subunits: a(1), b(2) and c(9-12). The alpha and beta chains form an alternating ring which encloses part of the gamma chain. CF(1) is attached to CF(0) by a central stalk formed by the gamma and epsilon chains, while a peripheral stalk is formed by the delta and b chains. In this bacterium the a and b subunits are transcribed but do not seem to be translated, thus the ATP synthase consists of the alpha, beta, gamma, delta, epsilon and c subunits.

It is found in the cell membrane. Its function is as follows. Key component of the proton channel; it plays a direct role in the translocation of protons across the membrane. The sequence is that of ATP synthase subunit a from Moorella thermoacetica (strain ATCC 39073 / JCM 9320).